Consider the following 1129-residue polypeptide: Translation initiation factor IF-2 (1129 aa).

Composition is skewed to low complexity over residues 33 to 42 and 56 to 99; these read AARSHSSSIS and GGSP…AAKP. Disordered regions lie at residues 33–462 and 485–515; these read AARS…IGEN and SLAR…ETAR. Residues 100-112 are compositionally biased toward pro residues; that stretch reads SPKPSAPSRPEAP. Low complexity predominate over residues 135 to 147; sequence STPAAAAPAAAPS. The span at 148-161 shows a compositional bias: pro residues; that stretch reads APAPSAPTPRPKPT. Over residues 162–175 the composition is skewed to low complexity; it reads APKASAPAPTASAP. 2 stretches are compositionally biased toward pro residues: residues 176–191 and 211–221; these read SAPP…PAPA and PTAPPTRPQPK. A compositionally biased stretch (low complexity) spans 257 to 273; that stretch reads GQRPGVSPRPSGPPGQR. The span at 431–445 shows a compositional bias: basic and acidic residues; sequence GRPDWDDSAKLEALR. Composition is skewed to basic residues over residues 490–499 and 506–515; these read SKPRTKHKPA and IRKRRKETAR. The 173-residue stretch at 621–793 folds into the tr-type G domain; sequence RRPPVVTVMG…ILLVTEVEDL (173 aa). The interval 630–637 is G1; sequence GHVDHGKT. 630-637 contacts GTP; sequence GHVDHGKT. The segment at 655–659 is G2; the sequence is GITQH. A G3 region spans residues 680 to 683; the sequence is DTPG. Residues 680-684 and 734-737 each bind GTP; these read DTPGH and NKID. Positions 734–737 are G4; sequence NKID. The tract at residues 770–772 is G5; sequence SAL.

This sequence belongs to the TRAFAC class translation factor GTPase superfamily. Classic translation factor GTPase family. IF-2 subfamily.

Its subcellular location is the cytoplasm. One of the essential components for the initiation of protein synthesis. Protects formylmethionyl-tRNA from spontaneous hydrolysis and promotes its binding to the 30S ribosomal subunits. Also involved in the hydrolysis of GTP during the formation of the 70S ribosomal complex. The chain is Translation initiation factor IF-2 from Synechococcus sp. (strain CC9311).